The sequence spans 192 residues: uncharacterized protein (192 aa).

Residues 29–160 (HRQAAVLIPI…PLDIYRRGDS (132 aa)) enclose the Nudix hydrolase domain. Residues 67–89 (GAVDDTDASVIAAALREAEEEVA) carry the Nudix box motif. Residues glutamate 83 and glutamate 87 each contribute to the Mg(2+) site.

This sequence belongs to the Nudix hydrolase family. PCD1 subfamily. Mn(2+) is required as a cofactor. It depends on Mg(2+) as a cofactor.

Probably mediates the hydrolysis of some nucleoside diphosphate derivatives. This is an uncharacterized protein from Escherichia coli (strain SE11).